The following is a 567-amino-acid chain: Wee1-like protein kinase 2 (567 aa).

Composition is skewed to basic and acidic residues over residues 1 to 12 (MDDKDIDKELRQ), 25 to 35 (EGQKKVEESRE), 42 to 51 (EKGEVQDSEA), and 64 to 77 (HELDTSSEKDKESP). The segment at 1–117 (MDDKDIDKEL…DSPSTPKTML (117 aa)) is disordered. Residue serine 76 is modified to Phosphoserine. The short motif at 173–175 (KRK) is the Nuclear localization signal element. Residues 212-486 (FLEVEKIGVG…AAALARNTVL (275 aa)) form the Protein kinase domain. Residues 218–226 (IGVGEFGTV) and lysine 241 each bind ATP. Positions 315 to 329 (KLKDILLQISLGLNY) match the Nuclear export signal motif. Aspartate 339 (proton acceptor) is an active-site residue. The Mg(2+) site is built by asparagine 344 and aspartate 380. The stretch at 494 to 519 (EELQQQLNLEKFKTATLERELREAQQ) forms a coiled coil. The interval 514–567 (LREAQQAQSPQGYTHHGDTGVSGTHTGSRSTKRLVGGKSARSSSFTSGEREPLH) is disordered.

The protein belongs to the protein kinase superfamily. Ser/Thr protein kinase family. WEE1 subfamily. Phosphorylated on serine residues. Phosphorylation leads to increase its activity. Expressed in oocytes (at protein level). May also be expressed in testis.

The protein resides in the nucleus. It catalyses the reaction L-tyrosyl-[protein] + ATP = O-phospho-L-tyrosyl-[protein] + ADP + H(+). Its function is as follows. Oocyte-specific protein tyrosine kinase that phosphorylates and inhibits CDK1/CDC2 and acts as a key regulator of meiosis during both prophase I and metaphase II. Required to maintain meiotic arrest in oocytes during the germinal vesicle (GV) stage, a long period of quiescence at dictyate prophase I, by phosphorylating CDK1 at 'Tyr-15', leading to inhibit CDK1 activity and prevent meiotic reentry. Also required for metaphase II exit during egg activation by phosphorylating CDK1 at 'Tyr-15', to ensure exit from meiosis in oocytes and promote pronuclear formation. The polypeptide is Wee1-like protein kinase 2 (WEE2) (Homo sapiens (Human)).